The following is a 395-amino-acid chain: Glutamyl-tRNA reductase (395 aa).

Substrate is bound by residues 45-48 (TCNR), Ser87, 92-94 (EDQ), and Gln98. The active-site Nucleophile is the Cys46. NADP(+) is bound at residue 167–172 (GAGEMG).

The protein belongs to the glutamyl-tRNA reductase family. As to quaternary structure, homodimer.

The enzyme catalyses (S)-4-amino-5-oxopentanoate + tRNA(Glu) + NADP(+) = L-glutamyl-tRNA(Glu) + NADPH + H(+). Its pathway is porphyrin-containing compound metabolism; protoporphyrin-IX biosynthesis; 5-aminolevulinate from L-glutamyl-tRNA(Glu): step 1/2. Its function is as follows. Catalyzes the NADPH-dependent reduction of glutamyl-tRNA(Glu) to glutamate 1-semialdehyde (GSA). The chain is Glutamyl-tRNA reductase from Methanosphaera stadtmanae (strain ATCC 43021 / DSM 3091 / JCM 11832 / MCB-3).